The primary structure comprises 682 residues: Potassium-transporting ATPase ATP-binding subunit (682 aa).

The next 4 membrane-spanning stretches (helical) occupy residues 34–54 (PVMF…IAMA), 62–82 (ALFS…ANFA), 219–239 (IALT…TATL), and 254–274 (VLVA…LSAI). The active-site 4-aspartylphosphate intermediate is the D307. Residues D344, E348, 377–384 (FTAQSRMS), and K395 each bind ATP. Mg(2+) contacts are provided by D518 and D522. Helical transmembrane passes span 588–608 (FAII…LNIM), 616–636 (AILS…PLAL), and 656–676 (IYGL…DLLL).

It belongs to the cation transport ATPase (P-type) (TC 3.A.3) family. Type IA subfamily. The system is composed of three essential subunits: KdpA, KdpB and KdpC.

The protein resides in the cell inner membrane. It carries out the reaction K(+)(out) + ATP + H2O = K(+)(in) + ADP + phosphate + H(+). Part of the high-affinity ATP-driven potassium transport (or Kdp) system, which catalyzes the hydrolysis of ATP coupled with the electrogenic transport of potassium into the cytoplasm. This subunit is responsible for energy coupling to the transport system and for the release of the potassium ions to the cytoplasm. This Escherichia coli O157:H7 (strain EC4115 / EHEC) protein is Potassium-transporting ATPase ATP-binding subunit.